Here is a 226-residue protein sequence, read N- to C-terminus: uncharacterized protein (226 aa).

Belongs to the HisA/HisF family.

This is an uncharacterized protein from Methanocaldococcus jannaschii (strain ATCC 43067 / DSM 2661 / JAL-1 / JCM 10045 / NBRC 100440) (Methanococcus jannaschii).